Reading from the N-terminus, the 214-residue chain is uncharacterized protein (214 aa).

Residues 131–214 form a disordered region; the sequence is TEDILSPPSP…SSSSDSLDAY (84 aa). Residues 174 to 189 are compositionally biased toward basic residues; sequence HRRRRTRRQLRYRQRV. Over residues 197-214 the composition is skewed to low complexity; it reads DLGEPLESSSSSDSLDAY.

This is an uncharacterized protein from Tupaia.